The sequence spans 1368 residues: Mediator of RNA polymerase II transcription subunit 23 (1368 aa).

The tract at residues 1343–1368 (VPPQAMNSGSPAPQSNQVPVSLPVTQ) is disordered. Over residues 1347 to 1368 (AMNSGSPAPQSNQVPVSLPVTQ) the composition is skewed to polar residues.

The protein belongs to the Mediator complex subunit 23 family. As to quaternary structure, interacts with ELK1. Component of the Mediator complex, which is composed of MED1, MED4, MED6, MED7, MED8, MED9, MED10, MED11, MED12, MED13, MED13L, MED14, MED15, MED16, MED17, MED18, MED19, MED20, MED21, MED22, MED23, MED24, MED25, MED26, MED27, MED29, MED30, MED31, CCNC, CDK8 and CDC2L6/CDK11. The MED12, MED13, CCNC and CDK8 subunits form a distinct module termed the CDK8 module. Mediator containing the CDK8 module is less active than Mediator lacking this module in supporting transcriptional activation. Individual preparations of the Mediator complex lacking one or more distinct subunits have been variously termed ARC, CRSP, DRIP, PC2, SMCC and TRAP. Interacts with CEBPB (when not methylated), CTNNB1, and GLI3. Interacts with the adenovirus E1A protein.

The protein resides in the nucleus. Required for transcriptional activation subsequent to the assembly of the pre-initiation complex. Component of the Mediator complex, a coactivator involved in the regulated transcription of nearly all RNA polymerase II-dependent genes. Mediator functions as a bridge to convey information from gene-specific regulatory proteins to the basal RNA polymerase II transcription machinery. Mediator is recruited to promoters by direct interactions with regulatory proteins and serves as a scaffold for the assembly of a functional pre-initiation complex with RNA polymerase II and the general transcription factors. Required for transcriptional activation by adenovirus E1A protein. Required for ELK1-dependent transcriptional activation in response to activated Ras signaling. This chain is Mediator of RNA polymerase II transcription subunit 23 (MED23), found in Homo sapiens (Human).